We begin with the raw amino-acid sequence, 245 residues long: tRNA (guanine-N(1)-)-methyltransferase (245 aa).

S-adenosyl-L-methionine contacts are provided by residues Gly111 and 131–136; that span reads IGDYVL.

This sequence belongs to the RNA methyltransferase TrmD family. Homodimer.

It is found in the cytoplasm. The catalysed reaction is guanosine(37) in tRNA + S-adenosyl-L-methionine = N(1)-methylguanosine(37) in tRNA + S-adenosyl-L-homocysteine + H(+). Its function is as follows. Specifically methylates guanosine-37 in various tRNAs. This Caldicellulosiruptor saccharolyticus (strain ATCC 43494 / DSM 8903 / Tp8T 6331) protein is tRNA (guanine-N(1)-)-methyltransferase.